Here is a 216-residue protein sequence, read N- to C-terminus: Peptide methionine sulfoxide reductase MsrA (216 aa).

Cysteine 54 is a catalytic residue.

The protein belongs to the MsrA Met sulfoxide reductase family.

It carries out the reaction L-methionyl-[protein] + [thioredoxin]-disulfide + H2O = L-methionyl-(S)-S-oxide-[protein] + [thioredoxin]-dithiol. The catalysed reaction is [thioredoxin]-disulfide + L-methionine + H2O = L-methionine (S)-S-oxide + [thioredoxin]-dithiol. Has an important function as a repair enzyme for proteins that have been inactivated by oxidation. Catalyzes the reversible oxidation-reduction of methionine sulfoxide in proteins to methionine. The polypeptide is Peptide methionine sulfoxide reductase MsrA (Xanthomonas campestris pv. phaseoli).